The primary structure comprises 339 residues: MQSWATDGSVFFLGRSRPPLSPRAMIPAIFLMGPTASGKTELAVRLADALPIDIISVDSLLVYRHFDIGSAKPSLALRQQYPHALVDIREPDEPYSAGLFREDALHCIALARERGRIPLLVGGTGLYFRALECGIDTLPPANPALRQSLMALAETAGWPALHQRLATLDPEAAAGIAPHDRQRIQRALEIILGSGQTISGARHWQGTFPGPLYKIILRPPRSWLHQRITQRFDVMLNEGFLDEIADLSARHYAPELPAMRAVGYRQYFTWHDGLCSAAEAYQAALAATRQLAKRQDTWFKRESAHYYLDPSRDDASSLLLQMATRPRQGEVHSIGWDNG.

33–40 (GPTASGKT) provides a ligand contact to ATP. Residue 35–40 (TASGKT) participates in substrate binding. 2 interaction with substrate tRNA regions span residues 58 to 61 (DSLL) and 182 to 186 (QRIQR).

It belongs to the IPP transferase family. Monomer. It depends on Mg(2+) as a cofactor.

The catalysed reaction is adenosine(37) in tRNA + dimethylallyl diphosphate = N(6)-dimethylallyladenosine(37) in tRNA + diphosphate. Its function is as follows. Catalyzes the transfer of a dimethylallyl group onto the adenine at position 37 in tRNAs that read codons beginning with uridine, leading to the formation of N6-(dimethylallyl)adenosine (i(6)A). This is tRNA dimethylallyltransferase from Acidithiobacillus ferrooxidans (strain ATCC 23270 / DSM 14882 / CIP 104768 / NCIMB 8455) (Ferrobacillus ferrooxidans (strain ATCC 23270)).